Consider the following 31-residue polypeptide: MSDINTARLPCIGFLGIPSVGDDIEMVLRHG.

Residues 1-10 (MSDINTARLP) constitute a propeptide that is removed on maturation. Positions 11 to 18 (CIGFLGIP) form a cross-link, cyclopeptide (Cys-Pro). The propeptide occupies 19–31 (SVGDDIEMVLRHG).

This sequence belongs to the MSDIN fungal toxin family. In terms of processing, processed by the macrocyclase-peptidase enzyme POPB to yield a toxic cyclic octapeptide. POPB first removes 10 residues from the N-terminus. Conformational trapping of the remaining peptide forces the enzyme to release this intermediate rather than proceed to macrocyclization. The enzyme rebinds the remaining peptide in a different conformation and catalyzes macrocyclization of the N-terminal 8 residues.

Probable toxin that belongs to the MSDIN-like toxin family responsible for a large number of food poisoning cases and deaths. This is MSDIN-like toxin proprotein 8 from Amanita bisporigera (Destroying angel).